Reading from the N-terminus, the 102-residue chain is uncharacterized protein (102 aa).

Residues 1–41 are disordered; sequence MAAPRQIAFYGKGGTGKPKRKPEPVTASKEDRCLGSPSKNK.

To the N-terminal of nitrogenase iron protein (NifH). Has lost the ATP-binding site.

This protein is either not expressed, expressed at low levels or rapidly degraded. This is an uncharacterized protein from Rhizobium meliloti (Ensifer meliloti).